We begin with the raw amino-acid sequence, 226 residues long: Urease accessory protein UreF (226 aa).

This sequence belongs to the UreF family. In terms of assembly, ureD, UreF and UreG form a complex that acts as a GTP-hydrolysis-dependent molecular chaperone, activating the urease apoprotein by helping to assemble the nickel containing metallocenter of UreC. The UreE protein probably delivers the nickel.

Its subcellular location is the cytoplasm. Required for maturation of urease via the functional incorporation of the urease nickel metallocenter. In Burkholderia vietnamiensis (strain G4 / LMG 22486) (Burkholderia cepacia (strain R1808)), this protein is Urease accessory protein UreF.